Reading from the N-terminus, the 105-residue chain is Large ribosomal subunit protein uL24 (105 aa).

This sequence belongs to the universal ribosomal protein uL24 family. Part of the 50S ribosomal subunit.

Functionally, one of two assembly initiator proteins, it binds directly to the 5'-end of the 23S rRNA, where it nucleates assembly of the 50S subunit. In terms of biological role, one of the proteins that surrounds the polypeptide exit tunnel on the outside of the subunit. This chain is Large ribosomal subunit protein uL24, found in Nitrosomonas europaea (strain ATCC 19718 / CIP 103999 / KCTC 2705 / NBRC 14298).